A 237-amino-acid polypeptide reads, in one-letter code: 2-C-methyl-D-erythritol 4-phosphate cytidylyltransferase (237 aa).

It belongs to the IspD/TarI cytidylyltransferase family. IspD subfamily.

The enzyme catalyses 2-C-methyl-D-erythritol 4-phosphate + CTP + H(+) = 4-CDP-2-C-methyl-D-erythritol + diphosphate. It participates in isoprenoid biosynthesis; isopentenyl diphosphate biosynthesis via DXP pathway; isopentenyl diphosphate from 1-deoxy-D-xylulose 5-phosphate: step 2/6. Its function is as follows. Catalyzes the formation of 4-diphosphocytidyl-2-C-methyl-D-erythritol from CTP and 2-C-methyl-D-erythritol 4-phosphate (MEP). This is 2-C-methyl-D-erythritol 4-phosphate cytidylyltransferase from Paraburkholderia xenovorans (strain LB400).